Reading from the N-terminus, the 79-residue chain is M-myrmicitoxin(01)-Tb1a (79 aa).

The signal sequence occupies residues 1–26 (MKLSFLSLVLAIILVMALMYTPHAEA). The propeptide occupies 27–56 (KAWADADADATAAADADADAVADALADAVA). Residue Val-76 is modified to Valine amide.

The protein belongs to the formicidae venom precursor-01 superfamily. The C-terminal amidation is important for antimicrobial activity, since a non-amidated synthetic peptide shows a reduced antimicrobial activity (2-20-fold depending on the strain tested). The amidation may play a positive role in the peptide conformation, since amidated peptide shows an increase of about 5% of helical content. As to expression, expressed by the venom gland.

It is found in the secreted. The protein resides in the target cell membrane. Its function is as follows. Antimicrobial peptide that shows antimicrobial activities against all microorganisms tested with minimal inhibitory concentrations (MICs) values ranging from 0.45 to 97.5 umol/L. This peptide kills the microorganisms by permeabilizating the membranes. It shows a very weak hemolytic activity (HC(50)=325 umol/L) and weak cytotoxicity against human lymphocytes (LC(50)=67.8 umol/L). Gram-negative bacteria tested are E.coli (MIC=24.4 umol/L), C.sakazakii (MIC=5.8 umol/L), P.aeruginosa (MIC=8.7-12.2 umol/L), S.enterica (MIC=5.4 umol/L), and H.pylori (MIC=0.99-3.9 umol/L). Gram-positive bacteria tested are E.hirae (MIC=12.2 umol/L), S.aureus (MIC=3.0-6.4 umol/L), methicillin-resistant S.aureus (MRSA) (MIC=8.7 umol/L), S.xylosus (MIC=0.45-1.3 umol/L), and B.subtilis (MIC=24.4 umol/L). Fungi tested are A.niger (MIC=0.75 umol/L), C.albicans (MIC=17.3 umol/L), G.candidum (MIC=97.5 umol/L), and S.cerevisiae (MIC=6.1 umol/L). Finally the parasite tested is L.infantum (MIC=1.5 umol/L). In Tetramorium bicarinatum (Tramp ant), this protein is M-myrmicitoxin(01)-Tb1a.